The sequence spans 127 residues: uncharacterized protein (127 aa).

This is an uncharacterized protein from Schizosaccharomyces pombe (strain 972 / ATCC 24843) (Fission yeast).